Consider the following 454-residue polypeptide: Bifunctional protein GlmU (454 aa).

The tract at residues 1 to 227 (MTQLSVVILA…FMEVEGANNR (227 aa)) is pyrophosphorylase. Residues 9–12 (LAAG), Lys-23, Gln-74, 79–80 (GT), 101–103 (YGD), Gly-138, Glu-152, Asn-167, and Asn-225 each bind UDP-N-acetyl-alpha-D-glucosamine. Asp-103 serves as a coordination point for Mg(2+). Asn-225 lines the Mg(2+) pocket. Residues 228-248 (LQLAALERFYQKTQAEKLLLA) form a linker region. An N-acetyltransferase region spans residues 249–454 (GVRLIDPARF…QGWQRPTKKK (206 aa)). UDP-N-acetyl-alpha-D-glucosamine-binding residues include Arg-331 and Lys-349. His-361 (proton acceptor) is an active-site residue. UDP-N-acetyl-alpha-D-glucosamine-binding residues include Tyr-364 and Asn-375. Residues Ala-378, 384–385 (NY), Ser-403, Ala-421, and Arg-438 contribute to the acetyl-CoA site.

The protein in the N-terminal section; belongs to the N-acetylglucosamine-1-phosphate uridyltransferase family. This sequence in the C-terminal section; belongs to the transferase hexapeptide repeat family. As to quaternary structure, homotrimer. Mg(2+) is required as a cofactor.

The protein resides in the cytoplasm. It carries out the reaction alpha-D-glucosamine 1-phosphate + acetyl-CoA = N-acetyl-alpha-D-glucosamine 1-phosphate + CoA + H(+). The catalysed reaction is N-acetyl-alpha-D-glucosamine 1-phosphate + UTP + H(+) = UDP-N-acetyl-alpha-D-glucosamine + diphosphate. It participates in nucleotide-sugar biosynthesis; UDP-N-acetyl-alpha-D-glucosamine biosynthesis; N-acetyl-alpha-D-glucosamine 1-phosphate from alpha-D-glucosamine 6-phosphate (route II): step 2/2. It functions in the pathway nucleotide-sugar biosynthesis; UDP-N-acetyl-alpha-D-glucosamine biosynthesis; UDP-N-acetyl-alpha-D-glucosamine from N-acetyl-alpha-D-glucosamine 1-phosphate: step 1/1. The protein operates within bacterial outer membrane biogenesis; LPS lipid A biosynthesis. Functionally, catalyzes the last two sequential reactions in the de novo biosynthetic pathway for UDP-N-acetylglucosamine (UDP-GlcNAc). The C-terminal domain catalyzes the transfer of acetyl group from acetyl coenzyme A to glucosamine-1-phosphate (GlcN-1-P) to produce N-acetylglucosamine-1-phosphate (GlcNAc-1-P), which is converted into UDP-GlcNAc by the transfer of uridine 5-monophosphate (from uridine 5-triphosphate), a reaction catalyzed by the N-terminal domain. This Actinobacillus pleuropneumoniae serotype 3 (strain JL03) protein is Bifunctional protein GlmU.